The following is a 275-amino-acid chain: Thioredoxin-like 1-1, chloroplastic (275 aa).

A chloroplast-targeting transit peptide spans 1 to 72 (MTEVISKTSL…GDSQDESFRR (72 aa)). Positions 73–206 (SSAITAQTTL…FRDALAKHGP (134 aa)) constitute a Thioredoxin domain. Catalysis depends on nucleophile residues Cys129 and Cys132. Residues Cys129 and Cys132 are joined by a disulfide bond. The interval 238–275 (KPVPVEKEAATPDSNPSLPVPLPSMSSNDEKTLVSAGR) is disordered. Positions 249-264 (PDSNPSLPVPLPSMSS) are enriched in low complexity.

The protein belongs to the thioredoxin family.

It localises to the plastid. It is found in the chloroplast. Its function is as follows. Thiol-disulfide oxidoreductase that may participate in various redox reactions. Possesses insulin disulfide bonds reducing activity. In Arabidopsis thaliana (Mouse-ear cress), this protein is Thioredoxin-like 1-1, chloroplastic.